A 282-amino-acid chain; its full sequence is Acetylglutamate kinase (282 aa).

Residues 62-63, R84, and N178 contribute to the substrate site; that span reads GG.

It belongs to the acetylglutamate kinase family. ArgB subfamily.

It is found in the cytoplasm. It carries out the reaction N-acetyl-L-glutamate + ATP = N-acetyl-L-glutamyl 5-phosphate + ADP. It participates in amino-acid biosynthesis; L-arginine biosynthesis; N(2)-acetyl-L-ornithine from L-glutamate: step 2/4. In terms of biological role, catalyzes the ATP-dependent phosphorylation of N-acetyl-L-glutamate. The protein is Acetylglutamate kinase of Thermotoga neapolitana (strain ATCC 49049 / DSM 4359 / NBRC 107923 / NS-E).